The primary structure comprises 295 residues: Small ribosomal subunit protein uS2 (295 aa).

The tract at residues 260-295 (KQAKKFSKTKNIDEETNTEFEQALNDADENKNSDNA) is disordered.

The protein belongs to the universal ribosomal protein uS2 family.

This is Small ribosomal subunit protein uS2 from Rickettsia felis (strain ATCC VR-1525 / URRWXCal2) (Rickettsia azadi).